We begin with the raw amino-acid sequence, 539 residues long: Cytochrome P450 monooxygenase pvhE (539 aa).

A helical membrane pass occupies residues Val15 to Thr31. The N-linked (GlcNAc...) asparagine glycan is linked to Asn379. Cys473 lines the heme pocket.

This sequence belongs to the cytochrome P450 family. The cofactor is heme.

The protein resides in the membrane. It functions in the pathway secondary metabolite biosynthesis. In terms of biological role, cytochrome P450 monooxygenase; part of the gene cluster that mediates the biosynthesis of varicidin A, an antifungal natural product containing a cis-octahydrodecalin core. The PKS module of pvhA together with the enoylreductase pvhC catalyze the formation of the polyketide unit which is then conjugated to L-isoleucine by the condensation domain of the NRPS module. Activity of the Dieckmann cyclase domain (RED) of pvhA results in release of an acyclic tetramate. The cytochrome P450 monooxygenase pvhE then catalyzes the oxidation of the C21 methyl group to a to carboxylate group. The methyltransferase pvhD then further methylates the pvhE product. The Diels-Alderase pvhB is able to catalyze Diels-Alder cycloaddition using both pvhE and pvhD products as substrates to form the decalin ring, yielding varicidin B and A, respectively. This chain is Cytochrome P450 monooxygenase pvhE, found in Talaromyces variabilis (Penicillium variabile).